We begin with the raw amino-acid sequence, 313 residues long: Porphobilinogen deaminase (313 aa).

Cys-242 carries the post-translational modification S-(dipyrrolylmethanemethyl)cysteine.

It belongs to the HMBS family. In terms of assembly, monomer. Dipyrromethane is required as a cofactor.

The catalysed reaction is 4 porphobilinogen + H2O = hydroxymethylbilane + 4 NH4(+). Its pathway is porphyrin-containing compound metabolism; protoporphyrin-IX biosynthesis; coproporphyrinogen-III from 5-aminolevulinate: step 2/4. Tetrapolymerization of the monopyrrole PBG into the hydroxymethylbilane pre-uroporphyrinogen in several discrete steps. The sequence is that of Porphobilinogen deaminase from Pectobacterium carotovorum subsp. carotovorum (strain PC1).